A 416-amino-acid polypeptide reads, in one-letter code: MSYAIETFDPEIFQAIENERERQTNHLEMIASENFTIPAVMEAMGSVFTNKYAEGYPHKRYYGGCEYADVVEQLAIDRACELFDCNYANVQPHSGSQANGAVYAALIKAGDKILGMDLSHGGHLTHGSKPSFSGKNYHSFTYGVELDGRINYDRVMEIAKIVQPKIIVCGASAYAREIDFKKFREIADEVGAILFADIAHIAGLVCAGEHPSPFPYADVVTTTTHKTLAGPRGGMIMTNDEDIAKKINSAIFPGLQGGPLVHVIAAKAVGFKHNLSDEWKVYAKQVKANASILADVLIKRGYDVVSGGTDNHLVLVSFLDKEFSGKDADAALGAAGITVNKNTVPGETRSPFVTSGIRIGSPALTSRGMKEIEFEIIANKIADVLDNVNDSELHAKIKEEMKELASNFVIYDKPIY.

(6S)-5,6,7,8-tetrahydrofolate-binding positions include Leu-118 and Gly-122 to Leu-124. At Lys-226 the chain carries N6-(pyridoxal phosphate)lysine. Residue Ser-350 to Phe-352 coordinates (6S)-5,6,7,8-tetrahydrofolate.

It belongs to the SHMT family. As to quaternary structure, homodimer. It depends on pyridoxal 5'-phosphate as a cofactor.

Its subcellular location is the cytoplasm. It catalyses the reaction (6R)-5,10-methylene-5,6,7,8-tetrahydrofolate + glycine + H2O = (6S)-5,6,7,8-tetrahydrofolate + L-serine. It functions in the pathway one-carbon metabolism; tetrahydrofolate interconversion. Its pathway is amino-acid biosynthesis; glycine biosynthesis; glycine from L-serine: step 1/1. Its function is as follows. Catalyzes the reversible interconversion of serine and glycine with tetrahydrofolate (THF) serving as the one-carbon carrier. This reaction serves as the major source of one-carbon groups required for the biosynthesis of purines, thymidylate, methionine, and other important biomolecules. Also exhibits THF-independent aldolase activity toward beta-hydroxyamino acids, producing glycine and aldehydes, via a retro-aldol mechanism. The chain is Serine hydroxymethyltransferase from Sulfurovum sp. (strain NBC37-1).